The chain runs to 72 residues: MSLGVIAAAIAIGLSALGAGIGNGLIVSRTIEGVARQPELKGALQTIMFIGVALVEALPIIGVVIAFIVMNR.

Transmembrane regions (helical) follow at residues 1–21 (MSLGVIAAAIAIGLSALGAGI) and 49–69 (FIGVALVEALPIIGVVIAFIV).

It belongs to the ATPase C chain family. In terms of assembly, F-type ATPases have 2 components, F(1) - the catalytic core - and F(0) - the membrane proton channel. F(1) has five subunits: alpha(3), beta(3), gamma(1), delta(1), epsilon(1). F(0) has three main subunits: a(1), b(2) and c(10-14). The alpha and beta chains form an alternating ring which encloses part of the gamma chain. F(1) is attached to F(0) by a central stalk formed by the gamma and epsilon chains, while a peripheral stalk is formed by the delta and b chains.

Its subcellular location is the cell membrane. Its function is as follows. F(1)F(0) ATP synthase produces ATP from ADP in the presence of a proton or sodium gradient. F-type ATPases consist of two structural domains, F(1) containing the extramembraneous catalytic core and F(0) containing the membrane proton channel, linked together by a central stalk and a peripheral stalk. During catalysis, ATP synthesis in the catalytic domain of F(1) is coupled via a rotary mechanism of the central stalk subunits to proton translocation. Key component of the F(0) channel; it plays a direct role in translocation across the membrane. A homomeric c-ring of between 10-14 subunits forms the central stalk rotor element with the F(1) delta and epsilon subunits. The protein is ATP synthase subunit c of Bacillus cytotoxicus (strain DSM 22905 / CIP 110041 / 391-98 / NVH 391-98).